Consider the following 418-residue polypeptide: Gamma-glutamyl phosphate reductase (418 aa).

Belongs to the gamma-glutamyl phosphate reductase family.

It localises to the cytoplasm. The catalysed reaction is L-glutamate 5-semialdehyde + phosphate + NADP(+) = L-glutamyl 5-phosphate + NADPH + H(+). It participates in amino-acid biosynthesis; L-proline biosynthesis; L-glutamate 5-semialdehyde from L-glutamate: step 2/2. Catalyzes the NADPH-dependent reduction of L-glutamate 5-phosphate into L-glutamate 5-semialdehyde and phosphate. The product spontaneously undergoes cyclization to form 1-pyrroline-5-carboxylate. This chain is Gamma-glutamyl phosphate reductase, found in Trichlorobacter lovleyi (strain ATCC BAA-1151 / DSM 17278 / SZ) (Geobacter lovleyi).